Reading from the N-terminus, the 197-residue chain is FMN-dependent NADH:quinone oxidoreductase 1 (197 aa).

Residues S10, 16–18 (SQS), 93–96 (MYNF), and 137–140 (TRGG) contribute to the FMN site.

The protein belongs to the azoreductase type 1 family. As to quaternary structure, homodimer. Requires FMN as cofactor.

The catalysed reaction is 2 a quinone + NADH + H(+) = 2 a 1,4-benzosemiquinone + NAD(+). The enzyme catalyses N,N-dimethyl-1,4-phenylenediamine + anthranilate + 2 NAD(+) = 2-(4-dimethylaminophenyl)diazenylbenzoate + 2 NADH + 2 H(+). Quinone reductase that provides resistance to thiol-specific stress caused by electrophilic quinones. Its function is as follows. Also exhibits azoreductase activity. Catalyzes the reductive cleavage of the azo bond in aromatic azo compounds to the corresponding amines. The protein is FMN-dependent NADH:quinone oxidoreductase 1 of Photobacterium profundum (strain SS9).